Here is a 393-residue protein sequence, read N- to C-terminus: Envelope glycoprotein M (393 aa).

The Intravirion portion of the chain corresponds to 1–14; the sequence is MCGPRNAEAVSWRS. Residues 15–35 traverse the membrane as a helical segment; sequence WLIEVCGFALAALTLVLTLIF. Residues 36–83 are Virion surface-facing; that stretch reads ASLPEMGFPCFYATVADYDTLNDTSGGVWTRQPLVAPALFLETPTVTS. The chain crosses the membrane as a helical span at residues 84 to 104; that stretch reads FFGFTATVLLAHALYAVAGAV. Residues 105-130 are Intravirion-facing; sequence VLRREAGRLAFQPSVVLYAASTVAAP. The chain crosses the membrane as a helical span at residues 131–151; that stretch reads GTLMLGALCAWTLQAVVLLMA. At 152 to 154 the chain is on the virion surface side; sequence HKQ. Residues 155-175 form a helical membrane-spanning segment; that stretch reads AGLAAAAYITHFVFLALFGAC. Residues 176 to 207 are Intravirion-facing; sequence HACKGTGDVRAALAASPPLRRVAVHARAVVTN. The helical transmembrane segment at 208-228 threads the bilayer; it reads VVLGAVGLGAAVVGLMLGVLL. Residues 229–241 lie on the Virion surface side of the membrane; the sequence is ANSFHISLWKTAE. A helical membrane pass occupies residues 242-262; it reads AALAVFTLLALALMVFVEVVV. Over 263–264 the chain is Intravirion; that stretch reads SG. A helical membrane pass occupies residues 265–285; that stretch reads YVQVLPTPAFCVLVASAAFGV. Residues 286–303 lie on the Virion surface side of the membrane; the sequence is SAHRYFAKFSEALGETHG. A helical transmembrane segment spans residues 304-324; the sequence is VVIGTRAVLAVLSLIALAMIV. Residues 325-393 lie on the Intravirion side of the membrane; the sequence is VRLVRACIAH…EVVYENLGFE (69 aa).

The protein belongs to the herpesviridae glycoprotein M family. As to quaternary structure, interacts (via N-terminus) with gN (via N-terminus). The gM-gN heterodimer forms the gCII complex.

It is found in the virion membrane. The protein localises to the host Golgi apparatus. The protein resides in the host trans-Golgi network. Its subcellular location is the host endosome membrane. It localises to the host nucleus inner membrane. Envelope glycoprotein important for virion assembly and egress. Plays a role in the correct incorporation of gH-gL into virion membrane. Directs the glycoprotein N (gN) to the host trans-Golgi network. This chain is Envelope glycoprotein M, found in Suid herpesvirus 1 (SuHV-1).